Here is a 250-residue protein sequence, read N- to C-terminus: UDP-2,3-diacylglucosamine hydrolase (250 aa).

Residues aspartate 8, histidine 10, aspartate 41, asparagine 79, and histidine 114 each contribute to the Mn(2+) site. 79-80 (NR) serves as a coordination point for substrate. Residues aspartate 122, serine 160, glutamine 167, and histidine 195 each contribute to the substrate site. Residues histidine 195 and histidine 197 each contribute to the Mn(2+) site.

The protein belongs to the LpxH family. Mn(2+) serves as cofactor.

The protein resides in the cell inner membrane. It catalyses the reaction UDP-2-N,3-O-bis[(3R)-3-hydroxytetradecanoyl]-alpha-D-glucosamine + H2O = 2-N,3-O-bis[(3R)-3-hydroxytetradecanoyl]-alpha-D-glucosaminyl 1-phosphate + UMP + 2 H(+). The protein operates within glycolipid biosynthesis; lipid IV(A) biosynthesis; lipid IV(A) from (3R)-3-hydroxytetradecanoyl-[acyl-carrier-protein] and UDP-N-acetyl-alpha-D-glucosamine: step 4/6. In terms of biological role, hydrolyzes the pyrophosphate bond of UDP-2,3-diacylglucosamine to yield 2,3-diacylglucosamine 1-phosphate (lipid X) and UMP by catalyzing the attack of water at the alpha-P atom. Involved in the biosynthesis of lipid A, a phosphorylated glycolipid that anchors the lipopolysaccharide to the outer membrane of the cell. The sequence is that of UDP-2,3-diacylglucosamine hydrolase from Nitrosococcus oceani (strain ATCC 19707 / BCRC 17464 / JCM 30415 / NCIMB 11848 / C-107).